A 258-amino-acid polypeptide reads, in one-letter code: Short-chain dehydrogenase/reductase olcF (258 aa).

Positions 12, 58, and 120 each coordinate NADP(+). The active-site Proton donor is the S138. Y152, K156, and V185 together coordinate NADP(+). Y152 acts as the Proton acceptor in catalysis. Catalysis depends on K156, which acts as the Lowers pKa of active site Tyr.

This sequence belongs to the short-chain dehydrogenases/reductases (SDR) family.

It participates in secondary metabolite biosynthesis; terpenoid biosynthesis. In terms of biological role, short-chain dehydrogenase/reductase; part of the gene cluster that mediates the biosynthesis of 15-deoxyoxalicine B. The first step of the pathway is the synthesis of nicotinyl-CoA from nicotinic acid by the nicotinic acid-CoA ligase olcI. Nicotinyl-CoA is then a substrate of polyketide synthase olcA to produce 4-hydroxy-6-(3-pyridinyl)-2H-pyran-2-one (HPPO) which is further prenylated by the polyprenyl transferase olcH to yield geranylgeranyl-HPPO. Geranylgeranyl pyrophosphate is provided by the cluster-specific geranylgeranyl pyrophosphate synthase olcC. The FAD-dependent monooxygenase olcE catalyzes the epoxidation of geranylgeranyl-HPPO and the terpene cyclase olcD catalyzes the cyclization of the terpenoid component, resulting in the formation of the tricyclic terpene moiety seen in predecaturin E. The cytochrome P450 monooxygenase then catalyzes the allylic oxidation of predecaturin E, which is followed by spirocylization with concomitant loss of one molecule of water to form decaturin E. Decaturin E is the substrate of the cytochrome P450 monooxygenase olcJ which hydroxylates it at the C-29 position to form decaturin F. The short-chain dehydrogenase/reductase olcF may catalyze the oxidation of decaturin F to generate the 29-hydroxyl-27-one intermediate, and subsequent hemiacetal formation probably leads to the formation of decaturin C. The dioxygenase olcK may be a peroxisomal enzyme that catalyzes the hydroxylation of decaturin C into decaturin A once decaturin C is shuttled into the peroxisome by the MFS transporter olcL. Finally the cytochrome P450 monooxygenase olcB catalyzes the oxidative rearrangement to yield 15-deoxyoxalicine B. In the absence of olcJ, decaturin E may be shunted to a pathway in which it is oxidized to a ketone, possibly by olcF, to form decaturin D, which undergoes further allylic oxidation to yield decaturin G. Moreover, in the absence of oclK or oclL, oclB can convert decaturin C into 15-deoxyoxalicine A. This is Short-chain dehydrogenase/reductase olcF from Penicillium canescens.